The following is a 338-amino-acid chain: Glyceraldehyde-3-phosphate dehydrogenase 2 (338 aa).

Residues 13–14 (RI), aspartate 35, and arginine 80 contribute to the NAD(+) site. D-glyceraldehyde 3-phosphate is bound by residues 151–153 (SCT), threonine 182, 211–212 (TG), and arginine 234. Cysteine 152 serves as the catalytic Nucleophile. Position 316 (asparagine 316) interacts with NAD(+).

Belongs to the glyceraldehyde-3-phosphate dehydrogenase family. Homotetramer.

Its subcellular location is the cytoplasm. The catalysed reaction is D-glyceraldehyde 3-phosphate + phosphate + NAD(+) = (2R)-3-phospho-glyceroyl phosphate + NADH + H(+). The protein operates within carbohydrate degradation; glycolysis; pyruvate from D-glyceraldehyde 3-phosphate: step 1/5. Inhibited by koningic acid through the interaction of cysteine residues with koningic acid even at very low concentrations. This Trichoderma koningii (Hypocrea koningii) protein is Glyceraldehyde-3-phosphate dehydrogenase 2 (gpd2).